The sequence spans 540 residues: Chaperonin GroEL (540 aa).

ATP-binding positions include 30 to 33 (TLGP), Lys-51, 87 to 91 (DGTTT), Gly-415, and Asp-495.

Belongs to the chaperonin (HSP60) family. As to quaternary structure, forms a cylinder of 14 subunits composed of two heptameric rings stacked back-to-back. Interacts with the co-chaperonin GroES.

The protein localises to the cytoplasm. It catalyses the reaction ATP + H2O + a folded polypeptide = ADP + phosphate + an unfolded polypeptide.. Functionally, together with its co-chaperonin GroES, plays an essential role in assisting protein folding. The GroEL-GroES system forms a nano-cage that allows encapsulation of the non-native substrate proteins and provides a physical environment optimized to promote and accelerate protein folding. The chain is Chaperonin GroEL from Rhodothermus marinus (Rhodothermus obamensis).